A 432-amino-acid chain; its full sequence is Glutamyl-tRNA reductase (432 aa).

Substrate is bound by residues 55-58, Ser114, 119-121, and Gln125; these read TCNR and ETQ. The Nucleophile role is filled by Cys56. Residue 194-199 participates in NADP(+) binding; it reads GAGEMI.

It belongs to the glutamyl-tRNA reductase family. Homodimer.

It carries out the reaction (S)-4-amino-5-oxopentanoate + tRNA(Glu) + NADP(+) = L-glutamyl-tRNA(Glu) + NADPH + H(+). It functions in the pathway porphyrin-containing compound metabolism; protoporphyrin-IX biosynthesis; 5-aminolevulinate from L-glutamyl-tRNA(Glu): step 1/2. Catalyzes the NADPH-dependent reduction of glutamyl-tRNA(Glu) to glutamate 1-semialdehyde (GSA). The chain is Glutamyl-tRNA reductase from Burkholderia multivorans (strain ATCC 17616 / 249).